The following is a 352-amino-acid chain: C-C chemokine receptor type 5 (352 aa).

Over 1-30 (MDYQVSSPTYDIDYYTSEPCQKIKVKQIAA) the chain is Extracellular. Tyrosine 3 carries the sulfotyrosine modification. O-linked (GalNAc...) serine glycans are attached at residues serine 6 and serine 7. A sulfotyrosine mark is found at tyrosine 10, tyrosine 14, and tyrosine 15. Disulfide bonds link cysteine 20/cysteine 269 and cysteine 101/cysteine 178. The helical transmembrane segment at 31–58 (RLLPPLYSLVFIFGFVGNILVVLILINC) threads the bilayer. Residues 59-68 (KRLKSMTDIY) lie on the Cytoplasmic side of the membrane. Residues 69 to 89 (LLNLAISDLLFLLTVPFWAHY) form a helical membrane-spanning segment. Topologically, residues 90–102 (AAAQWDFGNTMCQ) are extracellular. A helical membrane pass occupies residues 103–124 (LLTGLYFIGFFSGIFFIILLTI). Over 125–141 (DRYLAIVHAVFALKART) the chain is Cytoplasmic. Residues 142 to 166 (VTFGVVTSVITWVVAVFASLPRIIF) form a helical membrane-spanning segment. Over 167-198 (TRSQREGLHYTCSSHFPYSQYQFWKNFQTLKI) the chain is Extracellular. A helical membrane pass occupies residues 199-218 (VILGLVLPLLVMVICYSGIL). Topologically, residues 219 to 235 (KTLLRCRNDKKRHRAVR) are cytoplasmic. A helical transmembrane segment spans residues 236 to 260 (LIFTIMIVYFLFWAPYNIVLLLNTF). Residues 261–277 (QEFFGLNNCSSSNRLDQ) are Extracellular-facing. Residues 278 to 301 (AMQVTETLGMTHCCINPIIYAFVG) form a helical membrane-spanning segment. The Cytoplasmic portion of the chain corresponds to 302-352 (EKFRNYLLVFFQKHIAKRFCKCCSIFQQDAPERASSVYTRSTGEQETSVGL). 3 S-palmitoyl cysteine lipidation sites follow: cysteine 321, cysteine 323, and cysteine 324. Serine 336, serine 337, serine 342, and serine 349 each carry phosphoserine; by BARK1.

This sequence belongs to the G-protein coupled receptor 1 family. As to quaternary structure, interacts with PRAF2. Efficient ligand binding to CCL3/MIP-1alpha and CCL4/MIP-1beta requires sulfation, O-glycosylation and sialic acid modifications. Glycosylation on Ser-6 is required for efficient binding of CCL4. Interacts with GRK2. Interacts with ARRB1 and ARRB2. Interacts with CNIH4. Interacts with S100A4; this interaction stimulates T-lymphocyte chemotaxis. Sulfated on at least 2 of the N-terminal tyrosines. Sulfation is required for efficient binding of the chemokines, CCL3 and CCL4. Post-translationally, palmitoylation in the C-terminal is important for cell surface expression. In terms of processing, phosphorylation on serine residues in the C-terminal is stimulated by binding CC chemokines especially by APO-RANTES. O-glycosylated, but not N-glycosylated. Ser-6 appears to be the major site even if Ser-7 may be also O-glycosylated. Also sialylated glycans present which contribute to chemokine binding. Thr-16 and Ser-17 may also be glycosylated and, if so, with small moieties such as a T-antigen.

It is found in the cell membrane. In terms of biological role, receptor for a number of inflammatory CC-chemokines including CCL3/MIP-1-alpha, CCL4/MIP-1-beta and RANTES and subsequently transduces a signal by increasing the intracellular calcium ion level. May play a role in the control of granulocytic lineage proliferation or differentiation. Participates in T-lymphocyte migration to the infection site by acting as a chemotactic receptor. This is C-C chemokine receptor type 5 (CCR5) from Chlorocebus sabaeus (Green monkey).